We begin with the raw amino-acid sequence, 391 residues long: MTAPQTPSSNFLWFLPTHGDGHYLGTSNGGRDVNFGYLRQIAQAADQLGYFGVLLPTGRSCEDSWVVASAVAPWTERLRYLVAVRPGLQSPSVAARMTATLDRLIGGRLLVNVVTGGDPVENKGDGVFLSHDERYEVTREFLNVYSDLLSGKTVNVAGKHITIEDGRLLFPPVQSPRPPLYFGGSSDAGIDVAADTVDKYLTWGEPPAQVAEKVNRVRAVAEQRGRKLSFGIRLHVIVRETNEAAWAAADDLIRYVTDDTIAAAQKVFARMDSVGQQRMSELHGGRRDKLEISPNLWAGVGLVRGGAGTALVGDPQTVAARIKEYQDVGIDTFILSGYPHLEEAYRFAELVFPLVKPQHAGNVTPLRANTGPFGETIANEHLPNAKQAVKP.

Belongs to the SsuD family.

It catalyses the reaction an alkanesulfonate + FMNH2 + O2 = an aldehyde + FMN + sulfite + H2O + 2 H(+). Catalyzes the desulfonation of aliphatic sulfonates. This Rhodopseudomonas palustris (strain ATCC BAA-98 / CGA009) protein is Alkanesulfonate monooxygenase.